Consider the following 570-residue polypeptide: MSEKHPGPLVVEGKLSDAERMKLESNYLRGTIAEDLNDGLTGGFKGDNFLLIRFHGMYQQDDRDIRAERAAQKLEPRHAMLLRCRLPGGVITTTQWKAIDKFAAENTIYGSIRLTNRQTFQFHGILKKNVKPVHQMLHSVGLDALATANDMNRNVLCTSNPYESQLHAEAYEWAKKISEHLLPRTRAYAEIWLDQKKVATTDEEPILGQTYLPRKFKTTVVIPPQNDIDLHANDMNFVAIAENGKLVGFNLLVGGGLSIEHGNKKTYARTASEFGYLPLEHTLAVAEAVVTTQRDWGNRTDRKNAKTKYTLERVGVETFKAEVERRAGIKFEPIRPYEFTGRGDRIGWVKGIDDKWHLTLFIENGRILDYPGRPLKTGLLEIAKVHQGEFRITANQNLIVASVPEDQKARIEKLARDHGLMNAVTPQRENSMACVSFPTCPLAMAEAERFLPSFIDKVEGVMSKHGVSDEHIVTRVTGCPNGCGRAMLAEVGLVGKAPGRYNLHIGGNRNGTRIPRMYRENITESEILDSLDELVGRWAKEREAGEGFGDFTVRAGIIRPVLDPARDFWE.

[4Fe-4S] cluster contacts are provided by C434, C440, C479, and C483. C483 provides a ligand contact to siroheme.

This sequence belongs to the nitrite and sulfite reductase 4Fe-4S domain family. In terms of assembly, alpha(8)-beta(8). The alpha component is a flavoprotein, the beta component is a hemoprotein. Requires siroheme as cofactor. [4Fe-4S] cluster serves as cofactor.

It catalyses the reaction hydrogen sulfide + 3 NADP(+) + 3 H2O = sulfite + 3 NADPH + 4 H(+). It functions in the pathway sulfur metabolism; hydrogen sulfide biosynthesis; hydrogen sulfide from sulfite (NADPH route): step 1/1. In terms of biological role, component of the sulfite reductase complex that catalyzes the 6-electron reduction of sulfite to sulfide. This is one of several activities required for the biosynthesis of L-cysteine from sulfate. The chain is Sulfite reductase [NADPH] hemoprotein beta-component from Klebsiella pneumoniae subsp. pneumoniae (strain ATCC 700721 / MGH 78578).